A 205-amino-acid chain; its full sequence is High frequency lysogenization protein HflD homolog (205 aa).

The protein belongs to the HflD family.

The protein resides in the cytoplasm. Its subcellular location is the cell inner membrane. The chain is High frequency lysogenization protein HflD homolog from Shewanella sp. (strain MR-7).